Here is a 147-residue protein sequence, read N- to C-terminus: Thyrotropin subunit beta (147 aa).

The first 20 residues, 1–20 (MELSVAMYGLLCLLFSQAVP), serve as a signal peptide directing secretion. 6 disulfide bridges follow: Cys22/Cys72, Cys36/Cys87, Cys39/Cys127, Cys47/Cys103, Cys51/Cys105, and Cys108/Cys115. The N-linked (GlcNAc...) asparagine glycan is linked to Asn43.

This sequence belongs to the glycoprotein hormones subunit beta family. In terms of assembly, heterodimer of a common alpha chain and a unique beta chain which confers biological specificity to thyrotropin, lutropin, follitropin and gonadotropin. In terms of tissue distribution, pituitary gland. Higher levels seen in immature fishes than the mature fishes.

Its subcellular location is the secreted. In terms of biological role, indispensable for the control of thyroid structure and metabolism. May play some role in the biological processes of the immature fishes. This chain is Thyrotropin subunit beta (tshb), found in Oncorhynchus mykiss (Rainbow trout).